The sequence spans 345 residues: S-adenosylmethionine:tRNA ribosyltransferase-isomerase (345 aa).

The protein belongs to the QueA family. As to quaternary structure, monomer.

Its subcellular location is the cytoplasm. The catalysed reaction is 7-aminomethyl-7-carbaguanosine(34) in tRNA + S-adenosyl-L-methionine = epoxyqueuosine(34) in tRNA + adenine + L-methionine + 2 H(+). The protein operates within tRNA modification; tRNA-queuosine biosynthesis. In terms of biological role, transfers and isomerizes the ribose moiety from AdoMet to the 7-aminomethyl group of 7-deazaguanine (preQ1-tRNA) to give epoxyqueuosine (oQ-tRNA). The chain is S-adenosylmethionine:tRNA ribosyltransferase-isomerase from Shewanella halifaxensis (strain HAW-EB4).